A 133-amino-acid chain; its full sequence is uncharacterized protein (133 aa).

The chain crosses the membrane as a helical span at residues 91 to 113 (LFATALISCIPSSFSALSFLATL).

It localises to the membrane. This is an uncharacterized protein from Saccharomyces cerevisiae (strain ATCC 204508 / S288c) (Baker's yeast).